A 418-amino-acid chain; its full sequence is Probable serine hydroxymethyltransferase (418 aa).

(6S)-5,6,7,8-tetrahydrofolate-binding positions include L118 and 122-124; that span reads GHL. K226 carries the post-translational modification N6-(pyridoxal phosphate)lysine. 351–353 serves as a coordination point for (6S)-5,6,7,8-tetrahydrofolate; it reads SPF.

The protein belongs to the SHMT family. As to quaternary structure, homodimer. Requires pyridoxal 5'-phosphate as cofactor.

It is found in the cytoplasm. It carries out the reaction (6R)-5,10-methylene-5,6,7,8-tetrahydrofolate + glycine + H2O = (6S)-5,6,7,8-tetrahydrofolate + L-serine. It functions in the pathway one-carbon metabolism; tetrahydrofolate interconversion. Catalyzes the reversible interconversion of serine and glycine with tetrahydrofolate (THF) serving as the one-carbon carrier. This reaction serves as the major source of one-carbon groups required for the biosynthesis of purines, thymidylate, methionine, and other important biomolecules. This is Probable serine hydroxymethyltransferase from Mesomycoplasma hyopneumoniae (strain 7448) (Mycoplasma hyopneumoniae).